Here is a 232-residue protein sequence, read N- to C-terminus: 2,3,4,5-tetrahydropyridine-2,6-dicarboxylate N-acetyltransferase (232 aa).

Belongs to the transferase hexapeptide repeat family. DapH subfamily.

It carries out the reaction (S)-2,3,4,5-tetrahydrodipicolinate + acetyl-CoA + H2O = L-2-acetamido-6-oxoheptanedioate + CoA. Its pathway is amino-acid biosynthesis; L-lysine biosynthesis via DAP pathway; LL-2,6-diaminopimelate from (S)-tetrahydrodipicolinate (acetylase route): step 1/3. In terms of biological role, catalyzes the transfer of an acetyl group from acetyl-CoA to tetrahydrodipicolinate. This Streptococcus thermophilus (strain CNRZ 1066) protein is 2,3,4,5-tetrahydropyridine-2,6-dicarboxylate N-acetyltransferase.